The sequence spans 335 residues: Eukaryotic translation initiation factor 3 subunit I (335 aa).

WD repeat units lie at residues 8–47, 50–91, 145–184, 189–228, and 286–325; these read GHER…RLGT, GHQG…KTWD, CAES…LLFN, EPDL…VMKT, and GHFG…FDFT.

It belongs to the eIF-3 subunit I family. As to quaternary structure, component of the eukaryotic translation initiation factor 3 (eIF-3) complex.

The protein resides in the cytoplasm. Its function is as follows. Component of the eukaryotic translation initiation factor 3 (eIF-3) complex, which is involved in protein synthesis of a specialized repertoire of mRNAs and, together with other initiation factors, stimulates binding of mRNA and methionyl-tRNAi to the 40S ribosome. The eIF-3 complex specifically targets and initiates translation of a subset of mRNAs involved in cell proliferation. The sequence is that of Eukaryotic translation initiation factor 3 subunit I (tif34) from Botryotinia fuckeliana (strain B05.10) (Noble rot fungus).